Here is an 87-residue protein sequence, read N- to C-terminus: Small ribosomal subunit protein bS20 (87 aa).

The protein belongs to the bacterial ribosomal protein bS20 family.

Binds directly to 16S ribosomal RNA. The chain is Small ribosomal subunit protein bS20 from Roseobacter denitrificans (strain ATCC 33942 / OCh 114) (Erythrobacter sp. (strain OCh 114)).